A 298-amino-acid polypeptide reads, in one-letter code: TLR adapter interacting with SLC15A4 on the lysosome (298 aa).

The short motif at 287–291 is the pLxIS motif element; sequence SLHIS. Phosphoserine is present on Ser-291.

In terms of assembly, interacts (via pLxIS motif) with IRF5; leading to IRF5 activation. Interacts with SLC15A4; leading to its recruitment to endolysosome. The phosphorylated pLxIS motif constitutes an IRF5-binding motif, leading to recruitment of the transcription factor IRF5 to induce type-I interferons and other cytokines.

The protein resides in the lysosome membrane. It is found in the endosome membrane. Its subcellular location is the nucleus. The protein localises to the cytoplasm. Its function is as follows. Innate immune adapter that mediates the recruitment and activation of IRF5 downstream of endolysosomal toll-like receptors TLR7, TLR8 and TLR9. Following recruitment to endolysosome by SLC15A4 downstream of TLR7, TLR8 and TLR9, specifically recruits IRF5 transcription factor via its pLxIS motif, leading to IRF5 activation and subsequent expression of type I interferons. Plays a role in the regulation of endolysosomal pH in immune cells such as B-cells, dendritic cells and monocytes. This Mus musculus (Mouse) protein is TLR adapter interacting with SLC15A4 on the lysosome.